The following is a 549-amino-acid chain: TBC1 domain family member 3 (549 aa).

The region spanning 101 to 293 (GMPMNIRGPM…RLWDVYLVEG (193 aa)) is the Rab-GAP TBC domain. 2 S-palmitoyl cysteine lipidation sites follow: C318 and C325. A disordered region spans residues 350 to 419 (LTRKKGDLPP…PRSSTPCPGG (70 aa)). The span at 398-417 (PRPIWSASPPRAPRSSTPCP) shows a compositional bias: low complexity.

Post-translationally, ubiquitinated by a CUL7-based E3 ligase, which leads to proteasomal degradation. In terms of processing, palmitoylation is required for membrane localization and protects TBC1D3 from ubiquitination. Expressed in liver, skeletal muscle, kidney, pancreas, spleen, testis, ovary, small intestine and peripheral blood leukocytes. Overexpressed in prostate cancers.

It localises to the cell membrane. Functionally, acts as a GTPase activating protein for RAB5. Does not act on RAB4 or RAB11. In Homo sapiens (Human), this protein is TBC1 domain family member 3 (TBC1D3).